Here is a 447-residue protein sequence, read N- to C-terminus: Adenylosuccinate synthetase (447 aa).

Residues 35–41 (GDEGKGK) and 63–65 (GHT) each bind GTP. The active-site Proton acceptor is D36. Residues D36 and G63 each coordinate Mg(2+). IMP is bound by residues 36–39 (DEGK), 61–64 (NAGH), T153, R167, N245, T260, and R324. The active-site Proton donor is H64. Residue 320–326 (VTTKRKR) coordinates substrate. GTP-binding positions include R326, 352–354 (KLD), and 435–437 (GVG).

The protein belongs to the adenylosuccinate synthetase family. As to quaternary structure, homodimer. It depends on Mg(2+) as a cofactor.

It localises to the cytoplasm. It carries out the reaction IMP + L-aspartate + GTP = N(6)-(1,2-dicarboxyethyl)-AMP + GDP + phosphate + 2 H(+). It participates in purine metabolism; AMP biosynthesis via de novo pathway; AMP from IMP: step 1/2. Its function is as follows. Plays an important role in the de novo pathway and in the salvage pathway of purine nucleotide biosynthesis. Catalyzes the first committed step in the biosynthesis of AMP from IMP. Plays a role in the regulation of adult life span. This Drosophila melanogaster (Fruit fly) protein is Adenylosuccinate synthetase.